The primary structure comprises 432 residues: Serine/threonine-protein kinase stk11 (432 aa).

The region spanning 52–312 (YLMGDLLGEG…IQQIRQHNWF (261 aa)) is the Protein kinase domain. ATP-binding positions include 58 to 66 (LGEGSYGKV) and Lys81. The active-site Proton acceptor is Asp179. Thr192 carries the phosphothreonine; by autocatalysis modification. The disordered stretch occupies residues 398-432 (TESQLKTERRVSSSSQRKASTTGSKVRKLSACKQQ). The span at 409–421 (SSSSQRKASTTGS) shows a compositional bias: polar residues. Residues 422-432 (KVRKLSACKQQ) are compositionally biased toward basic residues. At Ser427 the chain carries Phosphoserine; by PKA.

Belongs to the protein kinase superfamily. CAMK Ser/Thr protein kinase family. LKB1 subfamily. Catalytic component of a trimeric complex composed of STK11/LKB1, STRAD (STRADA or STRADB) and CAB39/MO25 (CAB39/MO25alpha or CAB39L/MO25beta). Mg(2+) serves as cofactor. It depends on Mn(2+) as a cofactor. Phosphorylated by a cAMP-dependent protein kinase. Autophosphorylated in a reaction that prefers Mn(2+) to Mg(2+). In terms of tissue distribution, oocytes, eggs and early embryos.

It localises to the nucleus. Its subcellular location is the cytoplasm. The catalysed reaction is L-seryl-[protein] + ATP = O-phospho-L-seryl-[protein] + ADP + H(+). It catalyses the reaction L-threonyl-[protein] + ATP = O-phospho-L-threonyl-[protein] + ADP + H(+). Tumor suppressor serine/threonine-protein kinase that controls the activity of AMP-activated protein kinase (AMPK) family members, thereby playing a role in various processes such as cell metabolism, cell polarity, apoptosis and DNA damage response. Acts by phosphorylating the T-loop of AMPK family proteins, leading to promote their activity. The protein is Serine/threonine-protein kinase stk11 of Xenopus laevis (African clawed frog).